A 74-amino-acid chain; its full sequence is Protein krueppel (74 aa).

4 C2H2-type zinc fingers span residues 1–4, 10–32, 38–60, and 66–74; these read ERTH, FECPECHKRFTRDHHLKTHMRLH, YHCSHCDRQFVQVANLRRHLRVH, and YACELCAAK.

It belongs to the krueppel C2H2-type zinc-finger protein family.

It is found in the nucleus. Functionally, krueppel is a gap class segmentation protein. The polypeptide is Protein krueppel (Kr) (Apis mellifera (Honeybee)).